The following is a 472-amino-acid chain: Aspartyl/glutamyl-tRNA(Asn/Gln) amidotransferase subunit B (472 aa).

Belongs to the GatB/GatE family. GatB subfamily. Heterotrimer of A, B and C subunits.

The enzyme catalyses L-glutamyl-tRNA(Gln) + L-glutamine + ATP + H2O = L-glutaminyl-tRNA(Gln) + L-glutamate + ADP + phosphate + H(+). It catalyses the reaction L-aspartyl-tRNA(Asn) + L-glutamine + ATP + H2O = L-asparaginyl-tRNA(Asn) + L-glutamate + ADP + phosphate + 2 H(+). Functionally, allows the formation of correctly charged Asn-tRNA(Asn) or Gln-tRNA(Gln) through the transamidation of misacylated Asp-tRNA(Asn) or Glu-tRNA(Gln) in organisms which lack either or both of asparaginyl-tRNA or glutaminyl-tRNA synthetases. The reaction takes place in the presence of glutamine and ATP through an activated phospho-Asp-tRNA(Asn) or phospho-Glu-tRNA(Gln). This Campylobacter jejuni subsp. jejuni serotype O:2 (strain ATCC 700819 / NCTC 11168) protein is Aspartyl/glutamyl-tRNA(Asn/Gln) amidotransferase subunit B.